Reading from the N-terminus, the 1025-residue chain is Leucyl-cystinyl aminopeptidase (1025 aa).

Met-1 carries the N-acetylmethionine modification. Residues 1–110 (MEPFTNDRLQ…GACSVPSART (110 aa)) lie on the Cytoplasmic side of the membrane. A Dileucine internalization motif motif is present at residues 53 to 54 (LL). The residue at position 70 (Tyr-70) is a Phosphotyrosine. Positions 76–77 (LL) match the Dileucine internalization motif motif. Phosphoserine occurs at positions 80 and 91. Residues 96–101 (RQSPDG) form a tankyrase binding region. The helical; Signal-anchor for type II membrane protein transmembrane segment at 111-131 (MVVCAFVIVVAVSVIMVIYLL) threads the bilayer. Residues 132–1025 (PRCTFTKEGC…KNLKSLTWWL (894 aa)) lie on the Extracellular side of the membrane. N-linked (GlcNAc...) asparagine glycosylation is found at Asn-145, Asn-184, Asn-215, Asn-256, and Asn-266. Glu-295 provides a ligand contact to substrate. Residues Asn-368 and Asn-374 are each glycosylated (N-linked (GlcNAc...) asparagine). 428 to 432 (GAMEN) provides a ligand contact to substrate. Asn-448 carries N-linked (GlcNAc...) asparagine glycosylation. Residue His-464 participates in Zn(2+) binding. Glu-465 acts as the Proton acceptor in catalysis. 2 residues coordinate Zn(2+): His-468 and Glu-487. N-linked (GlcNAc...) asparagine glycosylation is found at Asn-525, Asn-578, Asn-598, Asn-664, Asn-682, Asn-760, Asn-834, Asn-850, and Asn-989.

The protein belongs to the peptidase M1 family. Homodimer. Binds tankyrases 1 and 2. Requires Zn(2+) as cofactor. In terms of processing, the pregnancy serum form is derived from the membrane-bound form by proteolytic processing. Post-translationally, N-glycosylated. Highly expressed in placenta, heart, kidney and small intestine. Detected at lower levels in neuronal cells in the brain, in skeletal muscle, spleen, liver, testes and colon.

The protein localises to the cell membrane. The protein resides in the secreted. The catalysed reaction is Release of an N-terminal amino acid, Cys-|-Xaa-, in which the half-cystine residue is involved in a disulfide loop, notably in oxytocin or vasopressin. Hydrolysis rates on a range of aminoacyl arylamides exceed that for the cystinyl derivative, however.. Functionally, release of an N-terminal amino acid, cleaves before cysteine, leucine as well as other amino acids. Degrades peptide hormones such as oxytocin, vasopressin and angiotensin III, and plays a role in maintaining homeostasis during pregnancy. May be involved in the inactivation of neuronal peptides in the brain. Cleaves Met-enkephalin and dynorphin. Binds angiotensin IV and may be the angiotensin IV receptor in the brain. This is Leucyl-cystinyl aminopeptidase (LNPEP) from Homo sapiens (Human).